The following is a 127-amino-acid chain: uncharacterized protein (127 aa).

The first 26 residues, 1–26 (MKAIYALLAVVALALVAVSLFSQSDS), serve as a signal peptide directing secretion.

This is an uncharacterized protein from Archaeoglobus fulgidus (strain ATCC 49558 / DSM 4304 / JCM 9628 / NBRC 100126 / VC-16).